A 454-amino-acid polypeptide reads, in one-letter code: Asparagine--tRNA ligase (454 aa).

It belongs to the class-II aminoacyl-tRNA synthetase family. Homodimer.

It localises to the cytoplasm. It catalyses the reaction tRNA(Asn) + L-asparagine + ATP = L-asparaginyl-tRNA(Asn) + AMP + diphosphate + H(+). This Mesoplasma florum (strain ATCC 33453 / NBRC 100688 / NCTC 11704 / L1) (Acholeplasma florum) protein is Asparagine--tRNA ligase.